Reading from the N-terminus, the 681-residue chain is DNA-directed RNA polymerase subunit beta' (681 aa).

Cysteine 69, cysteine 71, cysteine 87, and cysteine 90 together coordinate Zn(2+). 3 residues coordinate Mg(2+): aspartate 489, aspartate 491, and aspartate 493.

Belongs to the RNA polymerase beta' chain family. RpoC1 subfamily. As to quaternary structure, in plastids the minimal PEP RNA polymerase catalytic core is composed of four subunits: alpha, beta, beta', and beta''. When a (nuclear-encoded) sigma factor is associated with the core the holoenzyme is formed, which can initiate transcription. Mg(2+) is required as a cofactor. Requires Zn(2+) as cofactor.

Its subcellular location is the plastid. The protein localises to the chloroplast. It catalyses the reaction RNA(n) + a ribonucleoside 5'-triphosphate = RNA(n+1) + diphosphate. DNA-dependent RNA polymerase catalyzes the transcription of DNA into RNA using the four ribonucleoside triphosphates as substrates. The chain is DNA-directed RNA polymerase subunit beta' from Anthoceros angustus (Hornwort).